The sequence spans 348 residues: Spermatogenesis-associated protein 32 (348 aa).

A compositionally biased stretch (basic and acidic residues) spans 27-36; the sequence is YHHHHHPLED. The interval 27–61 is disordered; sequence YHHHHHPLEDNKDEDNEMGTELSSMKPPPKVDPDP. Phosphoserine occurs at positions 149 and 152. Residues 308–329 form a disordered region; the sequence is APATSPELQEDKDDSVPGTKKG. At Thr-330 the chain carries Phosphothreonine.

Interacts with syntaxin-1 and ACTB. In terms of tissue distribution, abundantly expressed in testes. Expressed in germ cells, but not in Sertoli or Leydig cells of the adult testis. Localized at the acrosomal region of the round and elongated spermatids at stages VIII-X.

The polypeptide is Spermatogenesis-associated protein 32 (Spata32) (Rattus norvegicus (Rat)).